The primary structure comprises 61 residues: Large ribosomal subunit protein eL29y (61 aa).

The segment at 1-61 (MAKSKNHTAH…KSGENAGVEE (61 aa)) is disordered. The span at 15 to 31 (KAHKNGIKKPRRHRHTP) shows a compositional bias: basic residues.

It belongs to the eukaryotic ribosomal protein eL29 family.

The sequence is that of Large ribosomal subunit protein eL29y (RPL29B) from Arabidopsis thaliana (Mouse-ear cress).